The sequence spans 443 residues: Xaa-Pro dipeptidase (443 aa).

Mn(2+)-binding residues include aspartate 246, aspartate 257, histidine 339, glutamate 384, and glutamate 423.

This sequence belongs to the peptidase M24B family. Bacterial-type prolidase subfamily. Mn(2+) is required as a cofactor.

The catalysed reaction is Xaa-L-Pro dipeptide + H2O = an L-alpha-amino acid + L-proline. Splits dipeptides with a prolyl residue in the C-terminal position. This chain is Xaa-Pro dipeptidase, found in Erwinia tasmaniensis (strain DSM 17950 / CFBP 7177 / CIP 109463 / NCPPB 4357 / Et1/99).